We begin with the raw amino-acid sequence, 702 residues long: MKHSITGTIGDHPLLLESGYLARQANGSVYLQCEGTAILATVCSSAQRQEGLDYVPLTVDFNEKYYAVGKMPGGFIKREGRPKDREILISRLIDRPMRPLFEKEFGRDIHVVPTCISSDMVHPHDVLAIVASSAAVTLSDIPFHGPVAAVRVAYLNGSYVINPTFSQIDAASMEVVVAGTRQGITMVEGGAREVSEDLMLGALEQAQEHIKALCDMQERLRGLCGKEKQTVIPSSAQLVGRDRIYELAYPRLAQALYAQGKGERRSACDAVKRDVAQQYAAQLENDVQRRLFDALFHEMEYEILRLNILDRGLRIDGRAIDAIRPIACEVGVLPRPHGSAVFTRGETQSLAVVTLGAMSDGQVYDDIEGDRRENFILHYNFPPFSVGEIGRMGVGRREIGHGCLAHRSLSAVIPDPEQFPYTVRVVSEILESNGSSSMATVCSGTLSLLHAGVPIKKPVAGIAMGLITDGVRYAILSDILGEEDHLGDMDFKVAGTCDGITGFQMDVKVEAVSASLMKEALQQARVGRLHILSVMNQTISAPSVHISRYAPHIESFKIAVEKIGALIGPGGKTVKSLSDQYRVTINTDSDGTVTVSGRDAQSVFDAKVAVVGLTEDPRVGRVYQGVVKRIVEFGAFVEIFPGKEGLCHVSKLSRSRVSKVSDVLQEGQRICVKLIDIDRMGRLNLSYIDALEGKSGGLDTTK.

Mg(2+)-binding residues include D484 and D490. In terms of domain architecture, KH spans 551-610; the sequence is PHIESFKIAVEKIGALIGPGGKTVKSLSDQYRVTINTDSDGTVTVSGRDAQSVFDAKVAV. In terms of domain architecture, S1 motif spans 620–688; sequence GRVYQGVVKR…RMGRLNLSYI (69 aa).

It belongs to the polyribonucleotide nucleotidyltransferase family. The cofactor is Mg(2+).

It is found in the cytoplasm. It catalyses the reaction RNA(n+1) + phosphate = RNA(n) + a ribonucleoside 5'-diphosphate. Its function is as follows. Involved in mRNA degradation. Catalyzes the phosphorolysis of single-stranded polyribonucleotides processively in the 3'- to 5'-direction. In Treponema pallidum (strain Nichols), this protein is Polyribonucleotide nucleotidyltransferase.